The chain runs to 489 residues: Glucose-6-phosphate 1-dehydrogenase (489 aa).

Residues 15–22 (GATGDLAK), R49, 86–87 (DV), and K149 contribute to the NADP(+) site. H179, K183, E217, and D236 together coordinate substrate. H241 functions as the Proton acceptor in the catalytic mechanism. Substrate is bound by residues K341 and K346.

The protein belongs to the glucose-6-phosphate dehydrogenase family.

It catalyses the reaction D-glucose 6-phosphate + NADP(+) = 6-phospho-D-glucono-1,5-lactone + NADPH + H(+). The protein operates within carbohydrate degradation; pentose phosphate pathway; D-ribulose 5-phosphate from D-glucose 6-phosphate (oxidative stage): step 1/3. Its function is as follows. Catalyzes the oxidation of glucose 6-phosphate to 6-phosphogluconolactone. The chain is Glucose-6-phosphate 1-dehydrogenase from Bacillus subtilis (strain 168).